The following is a 659-amino-acid chain: Replication protein E1 (659 aa).

Residues 30 to 57 are disordered; it reads RTGDTVSSDEDEEEDGGEDLVDFIDDRP. A compositionally biased stretch (acidic residues) spans 36 to 52; it reads SSDEDEEEDGGEDLVDF. A Nuclear localization signal motif is present at residues 85–87; the sequence is KRK. A phosphoserine; by host mark is found at serine 91, serine 95, serine 108, and serine 121. The Nuclear export signal signature appears at 107 to 116; it reads LSPRLDAIKL. The segment at 134 to 195 is disordered; it reads GYGQTQVDTE…DGEESQTESV (62 aa). Residues 135 to 160 show a composition bias toward polar residues; the sequence is YGQTQVDTESGPKQVQDICKTSQQDG. The DNA-binding region stretch occupies residues 196–362; the sequence is QTDTTACGVL…QTVVGHALEE (167 aa). Residues 461 to 611 enclose the SF3 helicase domain; sequence VEFIPFLCAL…FPLTTQGEPL (151 aa). Residue 487 to 494 coordinates ATP; that stretch reads GPADTGKS. Residue lysine 568 forms a Glycyl lysine isopeptide (Lys-Gly) (interchain with G-Cter in SUMO) linkage. The tract at residues 634–659 is disordered; it reads DPEDEEDNGNTSEPFRCVPGQNTRTV.

The protein belongs to the papillomaviridae E1 protein family. As to quaternary structure, can form hexamers. Interacts with E2 protein; this interaction increases E1 DNA binding specificity. Interacts with host DNA polymerase subunit POLA2. Interacts with host single stranded DNA-binding protein RPA1. Interacts with host TOP1; this interaction stimulates the enzymatic activity of TOP1. Post-translationally, phosphorylated. In terms of processing, sumoylated.

It localises to the host nucleus. The enzyme catalyses Couples ATP hydrolysis with the unwinding of duplex DNA by translocating in the 3'-5' direction.. It carries out the reaction ATP + H2O = ADP + phosphate + H(+). ATP-dependent DNA 3'-5' helicase required for initiation of viral DNA replication. It forms a complex with the viral E2 protein. The E1-E2 complex binds to the replication origin which contains binding sites for both proteins. During the initial step, a dimer of E1 interacts with a dimer of protein E2 leading to a complex that binds the viral origin of replication with high specificity. Then, a second dimer of E1 displaces the E2 dimer in an ATP-dependent manner to form the E1 tetramer. Following this, two E1 monomers are added to each half of the site, which results in the formation of two E1 trimers on the viral ori. Subsequently, two hexamers will be created. The double hexamer acts as a bi-directional helicase machinery and unwinds the viral DNA and then recruits the host DNA polymerase to start replication. The polypeptide is Replication protein E1 (Homo sapiens (Human)).